A 547-amino-acid chain; its full sequence is Probable pectinesterase/pectinesterase inhibitor 12 (547 aa).

Positions 1–23 (MALSSFNLSSLLFLLFFTPSVFS) are cleaved as a signal peptide. A pectinesterase inhibitor 12 region spans residues 31-185 (NPHETSATSF…YKHISNSLSA (155 aa)). 4 N-linked (GlcNAc...) asparagine glycosylation sites follow: Asn131, Asn247, Asn260, and Asn303. Residues 237 to 533 (SLVVAADGTG…FTATEFITGD (297 aa)) are pectinesterase 12. The substrate site is built by Thr312 and Gln342. The active-site Proton donor; for pectinesterase activity is the Asp365. Cys379 and Cys399 form a disulfide bridge. Catalysis depends on Asp386, which acts as the Nucleophile; for pectinesterase activity. Asn432 and Asn443 each carry an N-linked (GlcNAc...) asparagine glycan. Residues Arg454 and Trp456 each coordinate substrate. N-linked (GlcNAc...) asparagine glycosylation is present at Asn523.

It in the N-terminal section; belongs to the PMEI family. In the C-terminal section; belongs to the pectinesterase family. Expressed in siliques.

The protein resides in the secreted. The protein localises to the cell wall. The catalysed reaction is [(1-&gt;4)-alpha-D-galacturonosyl methyl ester](n) + n H2O = [(1-&gt;4)-alpha-D-galacturonosyl](n) + n methanol + n H(+). It functions in the pathway glycan metabolism; pectin degradation; 2-dehydro-3-deoxy-D-gluconate from pectin: step 1/5. Acts in the modification of cell walls via demethylesterification of cell wall pectin. In Arabidopsis thaliana (Mouse-ear cress), this protein is Probable pectinesterase/pectinesterase inhibitor 12 (PME12).